The chain runs to 507 residues: Maturase K (507 aa).

This sequence belongs to the intron maturase 2 family. MatK subfamily.

The protein resides in the plastid. It localises to the chloroplast. In terms of biological role, usually encoded in the trnK tRNA gene intron. Probably assists in splicing its own and other chloroplast group II introns. The chain is Maturase K from Cryptomeria japonica (Japanese cedar).